The following is a 376-amino-acid chain: Protein RecA (376 aa).

79 to 86 is an ATP binding site; the sequence is GPESSGKT. The interval 357–376 is disordered; the sequence is AAARAATDKPVETKGANAAA.

It belongs to the RecA family.

The protein localises to the cytoplasm. In terms of biological role, can catalyze the hydrolysis of ATP in the presence of single-stranded DNA, the ATP-dependent uptake of single-stranded DNA by duplex DNA, and the ATP-dependent hybridization of homologous single-stranded DNAs. It interacts with LexA causing its activation and leading to its autocatalytic cleavage. The protein is Protein RecA of Synechococcus sp. (strain CC9902).